The primary structure comprises 186 residues: PRA1 family protein G2 (186 aa).

A run of 4 helical transmembrane segments spans residues 66 to 86 (YFFVNYTIIVSTCAAFALITA), 87 to 107 (SPVALIVVGAIIALWLIFHFF), 119 to 139 (VGDRTVLLFLVLASVWAIWFT), and 142 to 162 (AVNLAVGVSVGLLLCIIHAVF).

This sequence belongs to the PRA1 family. As to expression, expressed in roots and trichomes.

It is found in the endoplasmic reticulum membrane. In terms of biological role, may be involved in both secretory and endocytic intracellular trafficking in the endosomal/prevacuolar compartments. This chain is PRA1 family protein G2 (PRA1G2), found in Arabidopsis thaliana (Mouse-ear cress).